We begin with the raw amino-acid sequence, 237 residues long: 7-cyano-7-deazaguanine synthase (237 aa).

9–19 lines the ATP pocket; that stretch reads YSGGLDSTTCL. Zn(2+) is bound by residues Cys-189, Cys-199, Cys-202, and Cys-205.

Belongs to the QueC family. Requires Zn(2+) as cofactor.

The enzyme catalyses 7-carboxy-7-deazaguanine + NH4(+) + ATP = 7-cyano-7-deazaguanine + ADP + phosphate + H2O + H(+). The protein operates within purine metabolism; 7-cyano-7-deazaguanine biosynthesis. In terms of biological role, catalyzes the ATP-dependent conversion of 7-carboxy-7-deazaguanine (CDG) to 7-cyano-7-deazaguanine (preQ(0)). The polypeptide is 7-cyano-7-deazaguanine synthase (Geobacter sulfurreducens (strain ATCC 51573 / DSM 12127 / PCA)).